The sequence spans 202 residues: MVSKNSKMQATLAVNSVLASLLPGAAAITGSNKKVSKPRVAKAQLIDMNLKKRLELQEKDVYLEKRKEKRARKSTLRKRREEEFEMEQKAKLQILNKHREQGTLTQKEKAYLDELAKRNTKKLKSWDLEDDVKEDFLEIQAQILNDTKESSKRRSSKKKNKNKGFKQTLSSSSKVQDHRYPGLTPGLAPVGLSDEEESSDDE.

Positions 145 to 202 (NDTKESSKRRSSKKKNKNKGFKQTLSSSSKVQDHRYPGLTPGLAPVGLSDEEESSDDE) are disordered. Positions 153 to 164 (RRSSKKKNKNKG) are enriched in basic residues. Residues 165–174 (FKQTLSSSSK) show a composition bias toward polar residues. Residues 193–202 (SDEEESSDDE) are compositionally biased toward acidic residues.

Belongs to the RRT14 family.

Its subcellular location is the nucleus. The protein localises to the nucleolus. Functionally, involved in ribosome biogenesis, probably through modulation of rDNA transcription. The chain is Regulator of rDNA transcription 14 (RRT14) from Candida glabrata (strain ATCC 2001 / BCRC 20586 / JCM 3761 / NBRC 0622 / NRRL Y-65 / CBS 138) (Yeast).